The primary structure comprises 387 residues: Succinate--CoA ligase [ADP-forming] subunit beta (387 aa).

The 236-residue stretch at 9–244 folds into the ATP-grasp domain; it reads KQLFAEYGIP…KTQEDETEVL (236 aa). Residues Lys-46, 53-55, Gly-102, and Glu-107 each bind ATP; that span reads GRG. Asn-199 and Asp-213 together coordinate Mg(2+). Residues Asn-264 and 321-323 contribute to the substrate site; that span reads GIV.

Belongs to the succinate/malate CoA ligase beta subunit family. In terms of assembly, heterotetramer of two alpha and two beta subunits. The cofactor is Mg(2+).

The enzyme catalyses succinate + ATP + CoA = succinyl-CoA + ADP + phosphate. The catalysed reaction is GTP + succinate + CoA = succinyl-CoA + GDP + phosphate. It functions in the pathway carbohydrate metabolism; tricarboxylic acid cycle; succinate from succinyl-CoA (ligase route): step 1/1. Its function is as follows. Succinyl-CoA synthetase functions in the citric acid cycle (TCA), coupling the hydrolysis of succinyl-CoA to the synthesis of either ATP or GTP and thus represents the only step of substrate-level phosphorylation in the TCA. The beta subunit provides nucleotide specificity of the enzyme and binds the substrate succinate, while the binding sites for coenzyme A and phosphate are found in the alpha subunit. This Xylella fastidiosa (strain 9a5c) protein is Succinate--CoA ligase [ADP-forming] subunit beta.